Here is a 336-residue protein sequence, read N- to C-terminus: Ultraviolet-sensitive opsin (336 aa).

Topologically, residues 1-29 (MDAWTYQFGNLSKISPFEGPQYHLAPKWA) are extracellular. Asparagine 10 is a glycosylation site (N-linked (GlcNAc...) asparagine). Residues 30 to 54 (FYLQAAFMGFVFFVGTPLNAIVLFV) traverse the membrane as a helical segment. At 55 to 66 (TMKYKKLRQPLN) the chain is on the cytoplasmic side. Residues 67–91 (YILVNISLGGFIFDTFSVSQVFFSA) form a helical membrane-spanning segment. Residues 92–106 (LRGYYFFGYTLCAME) lie on the Extracellular side of the membrane. The cysteines at positions 103 and 180 are disulfide-linked. The helical transmembrane segment at 107 to 126 (AAMGSIAGLVTGWSLAVLAF) threads the bilayer. Over 127–145 (ERYVVICKPFGSFKFGQSQ) the chain is Cytoplasmic. Residues 146–169 (ALGAVALTWIIGIGCATPPFWGWS) form a helical membrane-spanning segment. The Extracellular portion of the chain corresponds to 170–195 (RYIPEGIGTACGPDWYTKNEEYNTES). A helical membrane pass occupies residues 196–223 (YTYFLLVSCFMMPIMIITFSYSQLLGAL). Over 224–245 (RAVAAQQAESASTQKAEKEVSR) the chain is Cytoplasmic. The helical transmembrane segment at 246–269 (MVVVMVGSFVVCYGPYAITALYFS) threads the bilayer. The Extracellular segment spans residues 270–277 (YAEDSNKD). Residues 278 to 302 (YRLVAIPSLFSKSSCVYNPLIYAFM) traverse the membrane as a helical segment. Residue lysine 289 is modified to N6-(retinylidene)lysine. The Cytoplasmic segment spans residues 303–336 (NKQFNACIMETVFGKKIDESSEVSSKTETSSVSA).

The protein belongs to the G-protein coupled receptor 1 family. Opsin subfamily. Post-translationally, phosphorylated on some or all of the serine and threonine residues present in the C-terminal region.

It is found in the membrane. Visual pigments are the light-absorbing molecules that mediate vision. They consist of an apoprotein, opsin, covalently linked to cis-retinal. The sequence is that of Ultraviolet-sensitive opsin from Carassius auratus (Goldfish).